The sequence spans 738 residues: 1,4-alpha-glucan branching enzyme GlgB (738 aa).

Asp-399 functions as the Nucleophile in the catalytic mechanism. Glu-452 functions as the Proton donor in the catalytic mechanism.

This sequence belongs to the glycosyl hydrolase 13 family. GlgB subfamily. Monomer.

The enzyme catalyses Transfers a segment of a (1-&gt;4)-alpha-D-glucan chain to a primary hydroxy group in a similar glucan chain.. Its pathway is glycan biosynthesis; glycogen biosynthesis. Its function is as follows. Catalyzes the formation of the alpha-1,6-glucosidic linkages in glycogen by scission of a 1,4-alpha-linked oligosaccharide from growing alpha-1,4-glucan chains and the subsequent attachment of the oligosaccharide to the alpha-1,6 position. This chain is 1,4-alpha-glucan branching enzyme GlgB, found in Chlamydia trachomatis serovar L2b (strain UCH-1/proctitis).